A 375-amino-acid chain; its full sequence is Acetylornithine aminotransferase (375 aa).

Pyridoxal 5'-phosphate is bound by residues 102 to 103 (GA) and Phe129. Arg132 provides a ligand contact to N(2)-acetyl-L-ornithine. 214–217 (DEVQ) contacts pyridoxal 5'-phosphate. Lys243 bears the N6-(pyridoxal phosphate)lysine mark. Ser271 is a N(2)-acetyl-L-ornithine binding site. Pyridoxal 5'-phosphate is bound at residue Thr272.

Belongs to the class-III pyridoxal-phosphate-dependent aminotransferase family. ArgD subfamily. Homodimer. The cofactor is pyridoxal 5'-phosphate.

The protein localises to the cytoplasm. It carries out the reaction N(2)-acetyl-L-ornithine + 2-oxoglutarate = N-acetyl-L-glutamate 5-semialdehyde + L-glutamate. The protein operates within amino-acid biosynthesis; L-arginine biosynthesis; N(2)-acetyl-L-ornithine from L-glutamate: step 4/4. The chain is Acetylornithine aminotransferase from Archaeoglobus fulgidus (strain ATCC 49558 / DSM 4304 / JCM 9628 / NBRC 100126 / VC-16).